Reading from the N-terminus, the 144-residue chain is MGKKNEKIVEEAEKVEAETMEVDEQPQETPQVDDEEDLNVPSKKKMEILDPKSFEQDPSNLTLIMYEEDHTIGNSIKHILSRMDEVEFCGYNVPHPLEDKILFRVQTKDGINALEVLAKAFESVEQIFSTIRGKFEESYEQSQS.

Residues 14–47 are disordered; the sequence is KVEAETMEVDEQPQETPQVDDEEDLNVPSKKKME. Positions 18–38 are enriched in acidic residues; the sequence is ETMEVDEQPQETPQVDDEEDL.

Belongs to the archaeal Rpo11/eukaryotic RPB11/RPC19 RNA polymerase subunit family. Component of the RNA polymerase I (Pol I) and RNA polymerase III (Pol III) complexes consisting of at least 13 and 17 subunits, respectively.

It is found in the nucleus. DNA-dependent RNA polymerase catalyzes the transcription of DNA into RNA using the four ribonucleoside triphosphates as substrates. Common core component of RNA polymerases I and III which synthesize ribosomal RNA precursors and small RNAs, such as 5S rRNA and tRNAs, respectively. The sequence is that of Probable DNA-directed RNA polymerases I and III subunit RPAC2 (rpac-19) from Caenorhabditis elegans.